A 181-amino-acid chain; its full sequence is Inner membrane-spanning protein YciB (181 aa).

Transmembrane regions (helical) follow at residues isoleucine 22–alanine 42, methionine 50–aspartate 70, isoleucine 80–isoleucine 100, tryptophan 122–leucine 142, and phenylalanine 148–valine 168.

Belongs to the YciB family.

The protein resides in the cell inner membrane. Functionally, plays a role in cell envelope biogenesis, maintenance of cell envelope integrity and membrane homeostasis. The sequence is that of Inner membrane-spanning protein YciB from Aliivibrio fischeri (strain MJ11) (Vibrio fischeri).